A 161-amino-acid chain; its full sequence is Phosphohistidine phosphatase SixA (161 aa).

The protein belongs to the SixA phosphatase family.

In terms of biological role, exhibits phosphohistidine phosphatase activity towards the HPt domain of the ArcB sensor involved in the multistep His-Asp phosphorelay. This is Phosphohistidine phosphatase SixA (sixA) from Escherichia coli (strain K12).